Here is a 29-residue protein sequence, read N- to C-terminus: NADP phosphatase 1 (29 aa).

Homodimer.

It is found in the cytoplasm. In Arthrobacter sp. (strain KM), this protein is NADP phosphatase 1.